The chain runs to 293 residues: 4-hydroxy-tetrahydrodipicolinate synthase (293 aa).

Position 45 (T45) interacts with pyruvate. Catalysis depends on Y133, which acts as the Proton donor/acceptor. Residue K161 is the Schiff-base intermediate with substrate of the active site. Pyruvate is bound at residue I203.

Belongs to the DapA family. In terms of assembly, homotetramer; dimer of dimers.

It is found in the cytoplasm. The catalysed reaction is L-aspartate 4-semialdehyde + pyruvate = (2S,4S)-4-hydroxy-2,3,4,5-tetrahydrodipicolinate + H2O + H(+). Its pathway is amino-acid biosynthesis; L-lysine biosynthesis via DAP pathway; (S)-tetrahydrodipicolinate from L-aspartate: step 3/4. Catalyzes the condensation of (S)-aspartate-beta-semialdehyde [(S)-ASA] and pyruvate to 4-hydroxy-tetrahydrodipicolinate (HTPA). In Aliivibrio salmonicida (strain LFI1238) (Vibrio salmonicida (strain LFI1238)), this protein is 4-hydroxy-tetrahydrodipicolinate synthase.